We begin with the raw amino-acid sequence, 282 residues long: 1D-myo-inositol 2-acetamido-2-deoxy-alpha-D-glucopyranoside deacetylase (282 aa).

3 residues coordinate Zn(2+): H6, D9, and H141.

This sequence belongs to the MshB deacetylase family. Zn(2+) serves as cofactor.

The enzyme catalyses 1D-myo-inositol 2-acetamido-2-deoxy-alpha-D-glucopyranoside + H2O = 1D-myo-inositol 2-amino-2-deoxy-alpha-D-glucopyranoside + acetate. Its function is as follows. Catalyzes the deacetylation of 1D-myo-inositol 2-acetamido-2-deoxy-alpha-D-glucopyranoside (GlcNAc-Ins) in the mycothiol biosynthesis pathway. The chain is 1D-myo-inositol 2-acetamido-2-deoxy-alpha-D-glucopyranoside deacetylase from Nocardiopsis dassonvillei (strain ATCC 23218 / DSM 43111 / CIP 107115 / JCM 7437 / KCTC 9190 / NBRC 14626 / NCTC 10488 / NRRL B-5397 / IMRU 509) (Actinomadura dassonvillei).